The primary structure comprises 132 residues: UPF0102 protein Acel_1550 (132 aa).

The protein belongs to the UPF0102 family.

In Acidothermus cellulolyticus (strain ATCC 43068 / DSM 8971 / 11B), this protein is UPF0102 protein Acel_1550.